The chain runs to 223 residues: Ubiquitin carboxyl-terminal hydrolase isozyme L1 (223 aa).

An N-acetylmethionine modification is found at Met1. Positions 2–221 constitute a UCH catalytic domain; sequence QLKPMEINPE…VRFSAVALCK (220 aa). The interaction with ubiquitin stretch occupies residues 5–10; sequence PMEINP. Cys90 (nucleophile) is an active-site residue. Ser125 carries the post-translational modification Phosphoserine. The Proton donor role is filled by His161. The interaction with ubiquitin stretch occupies residues 211–216; the sequence is EVRFSA. Cys220 is lipidated: S-farnesyl cysteine. Positions 221-223 are cleaved as a propeptide — removed in mature form; the sequence is KCA.

Belongs to the peptidase C12 family. As to quaternary structure, monomer. Homodimer. Interacts with COPS5 and SNCA. In terms of processing, O-glycosylated.

The protein resides in the cytoplasm. It is found in the endoplasmic reticulum membrane. The enzyme catalyses Thiol-dependent hydrolysis of ester, thioester, amide, peptide and isopeptide bonds formed by the C-terminal Gly of ubiquitin (a 76-residue protein attached to proteins as an intracellular targeting signal).. In terms of biological role, ubiquitin-protein hydrolase involved both in the processing of ubiquitin precursors and of ubiquitinated proteins. This enzyme is a thiol protease that recognizes and hydrolyzes a peptide bond at the C-terminal glycine of ubiquitin. Also binds to free monoubiquitin and may prevent its degradation in lysosomes. The homodimer may have ATP-independent ubiquitin ligase activity. In Monodelphis domestica (Gray short-tailed opossum), this protein is Ubiquitin carboxyl-terminal hydrolase isozyme L1 (UCHL1).